The sequence spans 593 residues: Epidermal growth factor receptor kinase substrate 8-like protein 3 (593 aa).

Residues 28-155 (QHRVEHLMTC…ALEEELEQRP (128 aa)) enclose the PTB domain. Disordered stretches follow at residues 149-171 (EELEQRPRLGGLQPGQDRWRGPA), 184-239 (LEPG…ERDE), and 374-451 (ADWT…PAQP). Ser231 is subject to Phosphoserine. Positions 386-401 (PTFSDDWQLPEPSSQA) are enriched in polar residues. The segment covering 425 to 435 (PQEKTHNHDPQ) has biased composition (basic and acidic residues). The SH3 domain occupies 450-509 (QPALKMQVLYEFEARNPRELTVVQGEKLEVLDHSKRWWLVKNEAGRSGYIPSNILEPLQP).

Belongs to the EPS8 family. Interacts with ABI1. Part of a complex that contains SOS1, ABI1 and EPS8L2. Interacts with FASLG.

The protein resides in the cytoplasm. The protein is Epidermal growth factor receptor kinase substrate 8-like protein 3 (EPS8L3) of Homo sapiens (Human).